We begin with the raw amino-acid sequence, 365 residues long: MAENETPLTAVKVEALVVMKIMKHCSQTFPTTATGSIVGMDVGGTLEITNSFPFPVVEVPPESHFDNAAANPAAAAPRAKANTVYQAEMIRMLREVNVDANNVGWYTSANMGNFVNMNVIENQFFYQKEMNERTVALVHDVSRSSQGSLSLRAFRLSPKFMTAFKENKFTSEELQKSGLRYQDIFVELPVEIHNSHLITSFIHQLQTPNIPAPTELPSSLAALESGPFVKSSILAPNFDNLALSIDPFLEKNCDLLLDSIETHHTETNNFQYYQRSLAREQQRISAWQQKRKQENATRAALKQPLLPEDEWQRLFKLPQEPSRLESMLNSRQVDQYARQIDSFVSSTTGKMFAVKGNLLPGETAK.

In terms of domain architecture, MPN spans 11 to 160 (VKVEALVVMK…LRAFRLSPKF (150 aa)).

The protein belongs to the eIF-3 subunit H family. Component of the eukaryotic translation initiation factor 3 (eIF-3) complex.

The protein localises to the cytoplasm. Component of the eukaryotic translation initiation factor 3 (eIF-3) complex, which is involved in protein synthesis of a specialized repertoire of mRNAs and, together with other initiation factors, stimulates binding of mRNA and methionyl-tRNAi to the 40S ribosome. The eIF-3 complex specifically targets and initiates translation of a subset of mRNAs involved in cell proliferation. This Aspergillus fumigatus (strain CBS 144.89 / FGSC A1163 / CEA10) (Neosartorya fumigata) protein is Eukaryotic translation initiation factor 3 subunit H.